The chain runs to 357 residues: Ribosomal RNA large subunit methyltransferase M (357 aa).

Residues S183, 216–219, D235, D255, and D271 each bind S-adenosyl-L-methionine; that span reads APGG. Catalysis depends on K300, which acts as the Proton acceptor.

Belongs to the class I-like SAM-binding methyltransferase superfamily. RNA methyltransferase RlmE family. RlmM subfamily. In terms of assembly, monomer.

Its subcellular location is the cytoplasm. The catalysed reaction is cytidine(2498) in 23S rRNA + S-adenosyl-L-methionine = 2'-O-methylcytidine(2498) in 23S rRNA + S-adenosyl-L-homocysteine + H(+). In terms of biological role, catalyzes the 2'-O-methylation at nucleotide C2498 in 23S rRNA. This Pseudomonas fluorescens (strain Pf0-1) protein is Ribosomal RNA large subunit methyltransferase M.